The following is a 782-amino-acid chain: MFKSLTIKSNKVKPREENDENKQDPDPSNQPQQSTRQGENKSENKSLQTKMTPVTFEESHAKMQDKISEKNSLRDLTTNPNHQHPTESKGAMSEQKEMETGKEGLVSPKSKPLGVPVINEYADAQLHNLVRRMRQRTMLYKKKLAEGDISSPEASPQTAKPTAVPSTQESNAKLKEEHYYHILCFKFQKMPLTEYLKRFRLPGSIDSYTDRLYLLWLLLVTIAYNWNCWLIPLRLVFPYQTPDNTHYWFITDITCDIIYLCDMLLIQPRLQFIKGGDIMVDSNELKRHYRSSTKFQLDVASVMPFDVFYLFFGFNPVFRMNRILKYTSFFEFNHHLESIMDKAYIYRVIRTTGYLLYTLHINACIYYWASDYEGIGSTKWVYNGEGNKYLRCYYWAVRTLITIGGLPEPQTSFEIVFQLLNFFSGVFVFSSLIGQMQDVIGAATANQNNFRISMDHTISYMNTYSIPKNVQNRVRTWYEYTWDSQRMLDESDLLCTLPVTMQLALTVDVNLSIISKVELFKGCDTQMIYDMLLRLKSTVYLPGDFVCKKGEIGKEMYIIKQGEVQVLGGSDGAQVLVTLKAGAVFGEISLLAGRGGNRRTANVIAHGFANLLTLDKKTLQEILVHYPDSEKLLMKKASVLLKKKAPATETTPPRKGLAFLFPPKQETPKIFKALLGGTGKAGLTRLLKLKREQTIQKTSENSEEGGGKRREYEDKEREPSEKILDSSECRANCIIAEEMPQSIRRAALPRGTTRQSLIISMAPSAEAGEEVLTIEVKEKAKQ.

Disordered stretches follow at residues 1–111 and 147–168; these read MFKS…PKSK and GDIS…PSTQ. The Cytoplasmic segment spans residues 1-213; the sequence is MFKSLTIKSN…SIDSYTDRLY (213 aa). Basic and acidic residues-rich tracts occupy residues 13-25 and 57-73; these read KPRE…KQDP and EESH…KNSL. 2 stretches are compositionally biased toward polar residues: residues 74–83 and 152–168; these read RDLTTNPNHQ and PEAS…PSTQ. A helical transmembrane segment spans residues 214 to 237; the sequence is LLWLLLVTIAYNWNCWLIPLRLVF. Residues 238-244 are Extracellular-facing; that stretch reads PYQTPDN. A helical membrane pass occupies residues 245 to 265; sequence THYWFITDITCDIIYLCDMLL. Topologically, residues 266 to 294 are cytoplasmic; that stretch reads IQPRLQFIKGGDIMVDSNELKRHYRSSTK. Residues 295–312 traverse the membrane as a helical segment; the sequence is FQLDVASVMPFDVFYLFF. Topologically, residues 313 to 315 are extracellular; it reads GFN. A helical transmembrane segment spans residues 316–330; the sequence is PVFRMNRILKYTSFF. At 331-343 the chain is on the cytoplasmic side; sequence EFNHHLESIMDKA. The tract at residues 343–442 is ion conduction pathway; that stretch reads AYIYRVIRTT…IGQMQDVIGA (100 aa). A helical transmembrane segment spans residues 344–366; sequence YIYRVIRTTGYLLYTLHINACIY. Topologically, residues 367-388 are extracellular; that stretch reads YWASDYEGIGSTKWVYNGEGNK. The next 2 membrane-spanning stretches (helical) occupy residues 389 to 415 and 416 to 440; these read YLRC…SFEI and VFQL…QDVI. The interval 402-405 is selectivity filter; that stretch reads TIGG. Residues 441 to 782 are Cytoplasmic-facing; it reads GAATANQNNF…TIEVKEKAKQ (342 aa). The segment at 445–521 is C-linker; sequence ANQNNFRISM…SIISKVELFK (77 aa). The segment at 525-641 is cyclic nucleotide-binding domain; sequence TQMIYDMLLR…LLMKKASVLL (117 aa). The 3',5'-cyclic GMP site is built by G586, E587, R599, and T600. A disordered region spans residues 692–724; the sequence is EQTIQKTSENSEEGGGKRREYEDKEREPSEKIL. A compositionally biased stretch (basic and acidic residues) spans 705–724; the sequence is GGGKRREYEDKEREPSEKIL.

This sequence belongs to the cyclic nucleotide-gated cation channel (TC 1.A.1.5) family. CNGB3 subfamily. In terms of assembly, forms heterotetrameric channels composed of CNGA3 and CNGB3 subunits with 3:1 stoichiometry.

The protein localises to the cell membrane. It catalyses the reaction Ca(2+)(in) = Ca(2+)(out). The enzyme catalyses Na(+)(in) = Na(+)(out). It carries out the reaction K(+)(in) = K(+)(out). The catalysed reaction is NH4(+)(in) = NH4(+)(out). It catalyses the reaction Rb(+)(in) = Rb(+)(out). The enzyme catalyses Li(+)(in) = Li(+)(out). It carries out the reaction Cs(+)(in) = Cs(+)(out). In terms of biological role, pore-forming subunit of the cone cyclic nucleotide-gated channel. Mediates cone photoresponses at bright light converting transient changes in intracellular cGMP levels into electrical signals. In the dark, cGMP levels are high and keep the channel open enabling a steady inward current carried by Na(+) and Ca(2+) ions that leads to membrane depolarization and neurotransmitter release from synaptic terminals. Upon photon absorption cGMP levels decline leading to channel closure and membrane hyperpolarization that ultimately slows neurotransmitter release and signals the presence of light, the end point of the phototransduction cascade. Conducts cGMP- and cAMP-gated ion currents, with permeability for monovalent and divalent cations. The chain is Cyclic nucleotide-gated channel beta-3 from Canis lupus familiaris (Dog).